A 132-amino-acid chain; its full sequence is Large ribosomal subunit protein bL12 (132 aa).

The protein belongs to the bacterial ribosomal protein bL12 family. As to quaternary structure, homodimer. Part of the ribosomal stalk of the 50S ribosomal subunit. Forms a multimeric L10(L12)X complex, where L10 forms an elongated spine to which 2 to 4 L12 dimers bind in a sequential fashion. Binds GTP-bound translation factors.

In terms of biological role, forms part of the ribosomal stalk which helps the ribosome interact with GTP-bound translation factors. Is thus essential for accurate translation. This chain is Large ribosomal subunit protein bL12, found in Chloroflexus aggregans (strain MD-66 / DSM 9485).